The sequence spans 132 residues: Small ribosomal subunit protein uS8c (132 aa).

It belongs to the universal ribosomal protein uS8 family. In terms of assembly, part of the 30S ribosomal subunit.

The protein resides in the plastid. Its subcellular location is the chloroplast. Functionally, one of the primary rRNA binding proteins, it binds directly to 16S rRNA central domain where it helps coordinate assembly of the platform of the 30S subunit. The protein is Small ribosomal subunit protein uS8c (rps8) of Ceratophyllum demersum (Rigid hornwort).